The chain runs to 161 residues: uncharacterized protein (161 aa).

The helical transmembrane segment at 76-94 (ISISSQCIFNVVILSFVFT) threads the bilayer.

It is found in the membrane. This is an uncharacterized protein from Saccharomyces cerevisiae (strain ATCC 204508 / S288c) (Baker's yeast).